The sequence spans 156 residues: Cell division protein SepF (156 aa).

The tract at residues 15-58 (SDVVPEDEDDEVIDEEPESSFDTDRSVTPIPAASTQPSTSQRKS) is disordered. The segment covering 18 to 35 (VPEDEDDEVIDEEPESSF) has biased composition (acidic residues). A compositionally biased stretch (polar residues) spans 47-57 (ASTQPSTSQRK).

Belongs to the SepF family. In terms of assembly, homodimer. Interacts with FtsZ.

The protein resides in the cytoplasm. Its function is as follows. Cell division protein that is part of the divisome complex and is recruited early to the Z-ring. Probably stimulates Z-ring formation, perhaps through the cross-linking of FtsZ protofilaments. Its function overlaps with FtsA. This chain is Cell division protein SepF, found in Bifidobacterium animalis subsp. lactis (strain AD011).